The chain runs to 749 residues: Catalase-peroxidase 2 (749 aa).

The first 27 residues, 1 to 27 (MFKRTIPLFAAFTLAISPSVFPNYAYA), serve as a signal peptide directing secretion. The tryptophyl-tyrosyl-methioninium (Trp-Tyr) (with M-255) cross-link spans 107–229 (WHAAGTYRIY…LAATVMGLIY (123 aa)). Catalysis depends on His-108, which acts as the Proton acceptor. A cross-link (tryptophyl-tyrosyl-methioninium (Tyr-Met) (with W-107)) is located at residues 229 to 255 (YVNPEGPNGVPDPLAAAEKIRETFGRM). Heme b is bound at residue His-270.

The protein belongs to the peroxidase family. Peroxidase/catalase subfamily. As to quaternary structure, homodimer or homotetramer. Heme b is required as a cofactor. In terms of processing, formation of the three residue Trp-Tyr-Met cross-link is important for the catalase, but not the peroxidase activity of the enzyme.

The enzyme catalyses H2O2 + AH2 = A + 2 H2O. The catalysed reaction is 2 H2O2 = O2 + 2 H2O. Functionally, bifunctional enzyme with both catalase and broad-spectrum peroxidase activity. The sequence is that of Catalase-peroxidase 2 from Legionella pneumophila (strain Paris).